Consider the following 404-residue polypeptide: S-adenosylmethionine synthase (404 aa).

The span at 1 to 13 shows a compositional bias: polar residues; it reads MSQSRYFFTSESV. The interval 1–20 is disordered; it reads MSQSRYFFTSESVSEGHPDK. ATP is bound at residue His-17. Residue Asp-19 participates in Mg(2+) binding. Residue Glu-45 participates in K(+) binding. The L-methionine site is built by Glu-58 and Gln-101. Residues 101–111 are flexible loop; it reads QSPDINRGVDR. ATP is bound by residues 172 to 174, 245 to 246, Asp-254, 260 to 261, Ala-277, and Lys-281; these read DAK, RF, and RK. An L-methionine-binding site is contributed by Asp-254. Lys-285 contacts L-methionine.

This sequence belongs to the AdoMet synthase family. Homotetramer; dimer of dimers. Mg(2+) serves as cofactor. Requires K(+) as cofactor.

It is found in the cytoplasm. It carries out the reaction L-methionine + ATP + H2O = S-adenosyl-L-methionine + phosphate + diphosphate. It functions in the pathway amino-acid biosynthesis; S-adenosyl-L-methionine biosynthesis; S-adenosyl-L-methionine from L-methionine: step 1/1. Catalyzes the formation of S-adenosylmethionine (AdoMet) from methionine and ATP. The overall synthetic reaction is composed of two sequential steps, AdoMet formation and the subsequent tripolyphosphate hydrolysis which occurs prior to release of AdoMet from the enzyme. In Chlorobium limicola (strain DSM 245 / NBRC 103803 / 6330), this protein is S-adenosylmethionine synthase.